Consider the following 314-residue polypeptide: Dihydropteroate synthase (314 aa).

One can recognise a Pterin-binding domain in the interval 10 to 294 (TVICGIINVT…DVASHRMAVE (285 aa)). Asn-17 contacts Mg(2+). Residues Asp-91, Asn-110, Asp-201, Lys-237, and 282–284 (RVH) contribute to the (7,8-dihydropterin-6-yl)methyl diphosphate site.

This sequence belongs to the DHPS family. As to quaternary structure, homodimer. Mg(2+) is required as a cofactor.

It catalyses the reaction (7,8-dihydropterin-6-yl)methyl diphosphate + 4-aminobenzoate = 7,8-dihydropteroate + diphosphate. It participates in cofactor biosynthesis; tetrahydrofolate biosynthesis; 7,8-dihydrofolate from 2-amino-4-hydroxy-6-hydroxymethyl-7,8-dihydropteridine diphosphate and 4-aminobenzoate: step 1/2. Is potently inhibited by sulfonamides, with Ki values between 25 nM and 850 nM. Catalyzes the condensation of para-aminobenzoate (pABA) with 6-hydroxymethyl-7,8-dihydropterin diphosphate (DHPt-PP) to form 7,8-dihydropteroate, the immediate precursor of folate derivatives. In terms of biological role, is the target for the sulfonamide group of antimicrobial drugs. Sulfonamide drugs act as pABA analogs, they inhibit the reaction by acting as alternative substrates, leading to a 'dead end' sulfa-pterin product. In Streptococcus pneumoniae (strain ATCC BAA-255 / R6), this protein is Dihydropteroate synthase (sulA).